Reading from the N-terminus, the 399-residue chain is 1-deoxy-D-xylulose 5-phosphate reductoisomerase (399 aa).

Residues threonine 11, glycine 12, serine 13, isoleucine 14, glycine 37, asparagine 39, and asparagine 125 each contribute to the NADPH site. A 1-deoxy-D-xylulose 5-phosphate-binding site is contributed by lysine 126. Residue glutamate 127 coordinates NADPH. Residue aspartate 151 coordinates Mn(2+). Residues serine 152, glutamate 153, serine 177, and histidine 200 each coordinate 1-deoxy-D-xylulose 5-phosphate. Residue glutamate 153 coordinates Mn(2+). Glycine 206 is an NADPH binding site. Residues serine 213, asparagine 218, lysine 219, and glutamate 222 each contribute to the 1-deoxy-D-xylulose 5-phosphate site. Glutamate 222 is a Mn(2+) binding site.

The protein belongs to the DXR family. Mg(2+) serves as cofactor. Requires Mn(2+) as cofactor.

The catalysed reaction is 2-C-methyl-D-erythritol 4-phosphate + NADP(+) = 1-deoxy-D-xylulose 5-phosphate + NADPH + H(+). The protein operates within isoprenoid biosynthesis; isopentenyl diphosphate biosynthesis via DXP pathway; isopentenyl diphosphate from 1-deoxy-D-xylulose 5-phosphate: step 1/6. Its function is as follows. Catalyzes the NADPH-dependent rearrangement and reduction of 1-deoxy-D-xylulose-5-phosphate (DXP) to 2-C-methyl-D-erythritol 4-phosphate (MEP). In Nostoc sp. (strain PCC 7120 / SAG 25.82 / UTEX 2576), this protein is 1-deoxy-D-xylulose 5-phosphate reductoisomerase.